Consider the following 231-residue polypeptide: NDR1/HIN1-like protein 3 (231 aa).

The chain crosses the membrane as a helical span at residues 47-67; sequence VIFNILITIAVLLGIAALIIW. N102, N135, N145, and N215 each carry an N-linked (GlcNAc...) asparagine glycan.

In terms of assembly, may form oligomers or be a component of larger protein complex in plasma membranes. Post-translationally, glycosylated. As to expression, expressed in roots, young and senescing leaves, cauline leaves, stems and siliques.

The protein resides in the cell membrane. In terms of biological role, confers resistance to Pseudomonas syringae pv. tomato DC3000 (Pst DC3000). The polypeptide is NDR1/HIN1-like protein 3 (Arabidopsis thaliana (Mouse-ear cress)).